We begin with the raw amino-acid sequence, 66 residues long: Large ribosomal subunit protein bL35 (66 aa).

This sequence belongs to the bacterial ribosomal protein bL35 family.

The polypeptide is Large ribosomal subunit protein bL35 (Borrelia garinii subsp. bavariensis (strain ATCC BAA-2496 / DSM 23469 / PBi) (Borreliella bavariensis)).